A 464-amino-acid polypeptide reads, in one-letter code: tRNA modification GTPase MnmE (464 aa).

(6S)-5-formyl-5,6,7,8-tetrahydrofolate-binding residues include arginine 25, glutamate 87, and lysine 130. The 161-residue stretch at 226 to 386 (GLSVVLAGQP…LRAELLRIAG (161 aa)) folds into the TrmE-type G domain. Residue asparagine 236 participates in K(+) binding. Residues 236 to 241 (NVGKSS), 255 to 261 (TPIAGTT), and 280 to 283 (DTAG) contribute to the GTP site. Serine 240 is a Mg(2+) binding site. Threonine 255, isoleucine 257, and threonine 260 together coordinate K(+). Threonine 261 contacts Mg(2+). Lysine 464 lines the (6S)-5-formyl-5,6,7,8-tetrahydrofolate pocket.

The protein belongs to the TRAFAC class TrmE-Era-EngA-EngB-Septin-like GTPase superfamily. TrmE GTPase family. Homodimer. Heterotetramer of two MnmE and two MnmG subunits. The cofactor is K(+).

It localises to the cytoplasm. Its function is as follows. Exhibits a very high intrinsic GTPase hydrolysis rate. Involved in the addition of a carboxymethylaminomethyl (cmnm) group at the wobble position (U34) of certain tRNAs, forming tRNA-cmnm(5)s(2)U34. This Burkholderia ambifaria (strain ATCC BAA-244 / DSM 16087 / CCUG 44356 / LMG 19182 / AMMD) (Burkholderia cepacia (strain AMMD)) protein is tRNA modification GTPase MnmE.